The primary structure comprises 411 residues: Lissencephaly-1 homolog (411 aa).

Residues 7–39 (QREELNKAIADYLASNGFMEALESFKKETDMPG) enclose the LisH domain. Residues 54–80 (TSVIRLQKKVMDLEGRLAEAEKEYISG) are a coiled coil. Residues 77–89 (YISGTPSREKRSP) show a composition bias toward basic and acidic residues. Positions 77 to 96 (YISGTPSREKRSPTEWIPRP) are disordered. WD repeat units follow at residues 104-145 (GHRA…RTIK), 146-187 (GHTD…RTMH), 188-227 (GHDH…CVRT), 230-269 (GHRD…CKLE), 272-334 (EHDH…ALFT), 337-376 (GHDN…CCKT), and 379-411 (AHSH…WECR).

The protein belongs to the WD repeat LIS1/nudF family.

Its subcellular location is the cytoplasm. It localises to the cytoskeleton. The protein resides in the microtubule organizing center. It is found in the centrosome. Its function is as follows. Positively regulates the activity of the minus-end directed microtubule motor protein dynein. May enhance dynein-mediated microtubule sliding by targeting dynein to the microtubule plus end. Required for several dynein- and microtubule-dependent processes. This chain is Lissencephaly-1 homolog, found in Ixodes scapularis (Black-legged tick).